Reading from the N-terminus, the 462-residue chain is Microspherule protein 1 (462 aa).

Position 1 is an N-acetylmethionine (M1). Positions 1–130 (MDKDSQGLLD…KSKQPLQVTK (130 aa)) are disordered. The residue at position 22 (S22) is a Phosphoserine. Basic residues predominate over residues 43–55 (PKRRSSSRFIKRK). The span at 81 to 90 (SGRCSGSEPS) shows a compositional bias: low complexity. S102 is subject to Phosphoserine. T103 bears the Phosphothreonine mark. The span at 103 to 112 (TPVPPSPAPT) shows a compositional bias: pro residues. The residue at position 108 (S108) is a Phosphoserine. A Nuclear localization signal motif is present at residues 113 to 123 (PGLTKRVKKSK). Residues K123 and K130 each carry the N6-acetyllysine modification. S282 bears the Phosphoserine mark. The stretch at 301 to 335 (LEHELTVADRRQKREIRQLEQELHKWQVLVDSITG) forms a coiled coil. An FHA domain is found at 363–419 (ITLGRATKDNQIDVDLSLEGPAWKISRKQGVIKLKNNGDFFIANEGRRPIYIDGRPV). The short motif at 389-396 (RKQGVIKL) is the UBR5-degron element.

In terms of assembly, component of the chromatin remodeling INO80 complex; specifically part of a complex module associated with the N-terminus of INO80. Component of some MLL1/MLL complex, at least composed of the core components KMT2A/MLL1, ASH2L, HCFC1, WDR5 and RBBP5, as well as the facultative components BACC1, CHD8, E2F6, HSP70, INO80C, KANSL1, LAS1L, MAX, MCRS1, MGA, KAT8/MOF, PELP1, PHF20, PRP31, RING2, RUVB1/TIP49A, RUVB2/TIP49B, SENP3, TAF1, TAF4, TAF6, TAF7, TAF9 and TEX10. Component of the NSL complex at least composed of MOF/KAT8, KANSL1, KANSL2, KANSL3, MCRS1, PHF20, OGT1/OGT, WDR5 and HCFC1. Interacts with NOP2. Interacts with PINX1. Interacts with TERT. Interacts with CCDC85B. Interacts with DAXX. Interacts (via N-terminus) with FMR1 (via phosphorylated form). Interacts with FXR1 and FXR2. Interacts (via C-terminus) with NDE1 (via C-terminus); phosphorylation of NDE1 inhibits the interaction. Interacts (via C-terminus) with ZNF375. Interacts (via C-terminus) with active GTP-bound RHEB (via N-terminus) under conditions of high amino acid concentration; the interaction promotes mTORC1 complex activation by RHEB. Interacts (via N-terminus) with the mTORC1 complex; the interaction ensures mTORC1 activation by RHEB. Interacts with DYNC1I1; the interaction is required for the proper distribution of centriolar satellites. Interacts with TTBK2; the interaction is required for recruitment of TTBK2 to the mother centriole. Interacts with KIF2A; the interaction occurs during mitosis and facilitates chromosome alignment. In terms of processing, ubiquitinated by UBR5 when not assembled in the INO80 complex, leading to its degradation: UBR5 recognizes and binds a degron that is not accessible when MCRS1 is part of the INO80 complex. Phosphorylated by AURKA on Ser-35 and/or Ser-36 during mitosis which is required for kinetochore fiber assembly and mitotic progression but not for spindle localization or for chromosome-induced microtuble aster formation. Also phosphorylated by AURKA on Ser-85 and/or Ser-87. Phosphorylated by TTK/MPS1 which enhances recruitment of KIF2A to the minus end of spindle microtubules and facilitates precise chromosome segregation.

The protein localises to the nucleus. The protein resides in the nucleolus. It localises to the cytoplasm. It is found in the cytoskeleton. Its subcellular location is the microtubule organizing center. The protein localises to the centrosome. The protein resides in the spindle pole. It localises to the chromosome. It is found in the centromere. Its subcellular location is the kinetochore. The protein localises to the lysosome. The protein resides in the centriolar satellite. Its function is as follows. Modulates the transcription repressor activity of DAXX by recruiting it to the nucleolus. As part of the NSL complex it may be involved in acetylation of nucleosomal histone H4 on several lysine residues. Putative regulatory component of the chromatin remodeling INO80 complex which is involved in transcriptional regulation, DNA replication and probably DNA repair. May also be an inhibitor of TERT telomerase activity. Binds to G-quadruplex structures in mRNA. Binds to RNA homomer poly(G) and poly(U). Maintains RHEB at the lysosome in its active GTP-bound form and prevents its interaction with the mTORC1 complex inhibitor TSC2, ensuring activation of the mTORC1 complex by RHEB. Stabilizes the minus ends of kinetochore fibers by protecting them from depolymerization, ensuring functional spindle assembly during mitosis. Following phosphorylation by TTK/MPS1, enhances recruitment of KIF2A to the minus ends of mitotic spindle microtubules which promotes chromosome alignment. Regulates the morphology of microtubule minus ends in mitotic spindle by maintaining them in a closed conformation characterized by the presence of an electron-dense cap. Regulates G2/M transition and spindle assembly during oocyte meiosis. Mediates histone modifications and transcriptional regulation in germinal vesicle oocytes which are required for meiotic progression. Also regulates microtubule nucleation and spindle assembly by activating aurora kinases during oocyte meiosis. Contributes to the establishment of centriolar satellites and also plays a role in primary cilium formation by recruiting TTBK2 to the mother centriole which is necessary for removal of the CP110 cap from the mother centriole, an early step in ciliogenesis. Required for epiblast development during early embryogenesis. Essential for cell viability. The protein is Microspherule protein 1 (Mcrs1) of Mus musculus (Mouse).